Consider the following 176-residue polypeptide: Ribosome rescue factor SmrB (176 aa).

The Smr domain occupies 93–168 (LDLHGYRQSE…GDAALLVLID (76 aa)).

Belongs to the SmrB family. In terms of assembly, associates with collided ribosomes, but not with correctly translating polysomes.

Its function is as follows. Acts as a ribosome collision sensor. Detects stalled/collided disomes (pairs of ribosomes where the leading ribosome is stalled and a second ribosome has collided with it) and endonucleolytically cleaves mRNA at the 5' boundary of the stalled ribosome. Stalled/collided disomes form a new interface (primarily via the 30S subunits) that binds SmrB. Cleaved mRNA becomes available for tmRNA ligation, leading to ribosomal subunit dissociation and rescue of stalled ribosomes. The polypeptide is Ribosome rescue factor SmrB (Shewanella sp. (strain W3-18-1)).